A 118-amino-acid polypeptide reads, in one-letter code: Large ribosomal subunit protein uL18 (118 aa).

It belongs to the universal ribosomal protein uL18 family. In terms of assembly, part of the 50S ribosomal subunit; part of the 5S rRNA/L5/L18/L25 subcomplex. Contacts the 5S and 23S rRNAs.

This is one of the proteins that bind and probably mediate the attachment of the 5S RNA into the large ribosomal subunit, where it forms part of the central protuberance. The polypeptide is Large ribosomal subunit protein uL18 (Helicobacter pylori (strain P12)).